The primary structure comprises 144 residues: Large ribosomal subunit protein uL13 (144 aa).

This sequence belongs to the universal ribosomal protein uL13 family. As to quaternary structure, part of the 50S ribosomal subunit.

Functionally, this protein is one of the early assembly proteins of the 50S ribosomal subunit, although it is not seen to bind rRNA by itself. It is important during the early stages of 50S assembly. This is Large ribosomal subunit protein uL13 from Natronomonas pharaonis (strain ATCC 35678 / DSM 2160 / CIP 103997 / JCM 8858 / NBRC 14720 / NCIMB 2260 / Gabara) (Halobacterium pharaonis).